A 460-amino-acid chain; its full sequence is NADH-ubiquinone oxidoreductase chain 4 (460 aa).

A run of 13 helical transmembrane segments spans residues 22–42, 61–81, 97–114, 118–140, 149–169, 196–216, 226–246, 259–279, 286–305, 309–331, 352–372, 395–415, and 437–457; these read WLWP…LSWL, PLST…ILAS, YISL…AFSA, IMFY…RWGN, TYFL…LLLL, IWWT…GVHL, PIAG…YGMM, LSYP…SICM, SLIA…GILI, WGFT…LFCL, MALP…LALP, IALT…MFLM, and LLIA…ELIW.

It belongs to the complex I subunit 4 family.

The protein localises to the mitochondrion membrane. The catalysed reaction is a ubiquinone + NADH + 5 H(+)(in) = a ubiquinol + NAD(+) + 4 H(+)(out). Functionally, core subunit of the mitochondrial membrane respiratory chain NADH dehydrogenase (Complex I) that is believed to belong to the minimal assembly required for catalysis. Complex I functions in the transfer of electrons from NADH to the respiratory chain. The immediate electron acceptor for the enzyme is believed to be ubiquinone. The protein is NADH-ubiquinone oxidoreductase chain 4 (MT-ND4) of Tetraodon nigroviridis (Spotted green pufferfish).